A 343-amino-acid polypeptide reads, in one-letter code: Sodium/bile acid cotransporter 7-A (343 aa).

The Cytoplasmic portion of the chain corresponds to 1–10; that stretch reads MGLLERLRKE. The chain crosses the membrane as a helical span at residues 11-31; it reads WFIVGIILVIAAAKLEPTVGV. Over 32-37 the chain is Extracellular; it reads KGGPLK. The helical transmembrane segment at 38–58 threads the bilayer; that stretch reads PEITITYIAVSAIFFNSGLSL. Over 59-71 the chain is Cytoplasmic; the sequence is KTEELTNALMHVK. A helical membrane pass occupies residues 72 to 92; sequence LHLFVQLFTLVFFPTAIWLFL. At 93–116 the chain is on the extracellular side; the sequence is QVLSLTPINEWLLKGLQTVSCMPP. Residues 117–137 form a helical membrane-spanning segment; sequence PVSSAVILTKAVGGNEAAAIF. Asn-138 is a topological domain (cytoplasmic). A helical membrane pass occupies residues 139–159; sequence SAFGSFLGIVVTPLLLLLFLG. Residues 160-163 lie on the Extracellular side of the membrane; that stretch reads SSSS. A helical transmembrane segment spans residues 164–184; it reads VPFTSIFSQLFMTVVVPLIIG. Over 185–201 the chain is Cytoplasmic; that stretch reads QIVRRYIKDWLERKKPP. The helical transmembrane segment at 202 to 222 threads the bilayer; it reads FGAISSCVLLMIIYTTFCDTF. Topologically, residues 223-234 are extracellular; it reads SNPNIDLDTFSL. Residues 235 to 255 form a helical membrane-spanning segment; sequence VVIVFIIFFIQLAFMLLTFLF. At 256–270 the chain is on the cytoplasmic side; it reads STSKNSGFTPADTVA. The helical transmembrane segment at 271-291 threads the bilayer; it reads IVFCSTHKSLTLGIPMLKIVF. The Extracellular portion of the chain corresponds to 292 to 298; that stretch reads VGYEHLS. Residues 299-319 form a helical membrane-spanning segment; the sequence is LISVPLLIYHPAQILLGSVLV. At 320–343 the chain is on the cytoplasmic side; the sequence is PTIKSWMLSRQKALKLTRQPKIPL.

This sequence belongs to the bile acid:sodium symporter (BASS) (TC 2.A.28) family. As to expression, strongly expressed in small intestine. Moderately expressed in spleen. Weakly expressed in skeletal muscle. Not detected in other tissues tested.

The protein localises to the cell membrane. Its subcellular location is the endoplasmic reticulum membrane. The protein resides in the golgi apparatus membrane. In terms of biological role, involved in teeth and skeletal development. Has an essential role in the biosynthesis and trafficking of glycosaminoglycans and glycoproteins to produce a proper functioning extracellular matrix. Required for extracellular matrix mineralization. Also involved in the regulation of cellular calcium homeostasis. Does not show transport activity towards bile acids or steroid sulfates. This Xenopus laevis (African clawed frog) protein is Sodium/bile acid cotransporter 7-A (slc10a7-a).